We begin with the raw amino-acid sequence, 271 residues long: Histone chaperone asf-1 (271 aa).

A disordered region spans residues 152–271 (KWDSEASAPP…PKQQGMAMAQ (120 aa)). 2 stretches are compositionally biased toward acidic residues: residues 168–185 (PEAD…DELA) and 211–258 (IEED…EMEI).

This sequence belongs to the ASF1 family. In terms of assembly, interacts with histone H3 and histone H4.

The protein resides in the nucleus. Its function is as follows. Histone chaperone that facilitates histone deposition and histone exchange and removal during nucleosome assembly and disassembly. This is Histone chaperone asf-1 (asf-1) from Neurospora crassa (strain ATCC 24698 / 74-OR23-1A / CBS 708.71 / DSM 1257 / FGSC 987).